Consider the following 291-residue polypeptide: Tryptophan 2,3-dioxygenase (291 aa).

Substrate is bound by residues 51–55, Tyr113, and Arg117; that span reads FIIQH. His240 is a binding site for heme. Thr254 serves as a coordination point for substrate.

It belongs to the tryptophan 2,3-dioxygenase family. As to quaternary structure, homotetramer. The cofactor is heme.

It catalyses the reaction L-tryptophan + O2 = N-formyl-L-kynurenine. Its pathway is amino-acid degradation; L-tryptophan degradation via kynurenine pathway; L-kynurenine from L-tryptophan: step 1/2. In terms of biological role, heme-dependent dioxygenase that catalyzes the oxidative cleavage of the L-tryptophan (L-Trp) pyrrole ring and converts L-tryptophan to N-formyl-L-kynurenine. Catalyzes the oxidative cleavage of the indole moiety. In Myxococcus xanthus (strain DK1622), this protein is Tryptophan 2,3-dioxygenase.